Here is a 492-residue protein sequence, read N- to C-terminus: MALLEDIINFATLNPMVVVAIPVFLFVISLLRSYLRLAHIPGPFAAGWTNLPRFSWVLSFKAHDIHTALHRKYGPLVRFGPNMVSVGDPKEVGHIYGFTDPWMKSDFYHALLMKPRGKPIPGIFAAQDENIHRALKKPISSAYSMSTLLSFEPYVDSTMRVFCEQLESRFIENKKPLDFGKWLQMFAFDVIGELTFSRRLGFLESGEDINHVMANIWETFKKTSLVTQMPWLDKLWTNNPIQRWRRGGGASPGAAFAMARVEERRELQRTTNKNDWHFNTRDFLSRFMEAEAKDPSIPPYALAAWASSNITAGSDTTGIFLRTIFYQLLTHPETLRKLREELDQAAAAGNLDDLASWKQTRELPYLDAVIKEGGRIHPPFGLPYERVVPAQGATICGKFLPGGTLVGMSAWVVHRNKELYGEDCDEWNPDRWLKCDTEKRRKMENALLTFGAGHRTCMGKHIAYLEMYKVVPTLLRKYDVSRLLCFLVSRTG.

Residues 10-30 form a helical membrane-spanning segment; it reads FATLNPMVVVAIPVFLFVISL. Asn-309 carries N-linked (GlcNAc...) asparagine glycosylation. A heme-binding site is contributed by Cys-457.

It belongs to the cytochrome P450 family. Requires heme as cofactor.

Its subcellular location is the membrane. Its pathway is secondary metabolite biosynthesis. Its function is as follows. Cytochrome P450 monooxygenase; part of the cluster A that mediates the biosynthesis of azasperpyranones, members of the azaphilone family that exhibit anti-cancer activities. Azasperpyranones are synthesized by 2 clusters, A and B. Cluster A is responsible for the production of the polyhydric phenol moiety while the azaphilonoid scaffold is produced by the cluster B. The non-reducing polyketide synthase ATEG_03629 produces 5-methyl orsellinic acid, which is then reduced to 5-methyl orsellinic aldehyde by the NRPS-like protein ATEG_03630. 5-methyl orsellinic aldehyde is then first hydroxylated by the FAD-dependent monooxygenase ATEG_03635 and subsequently hydroxylated by the cytochrome P450 monooxygenase ATEG_03631 to produce the unstable polyhydric phenol precursor of azasperpyranones. On the other hand, the polyketide synthase ATEG_07659 is responsible for producing the 3,5-dimethyloctadienone moiety from acetyl-CoA, three malonyl-CoA, and two S-adenosyl methionines (SAM). The 3,5-dimethyloctadienone moiety is then loaded onto the SAT domain of ATEG_07661 and extended with four malonyl-CoA and one SAM, which leads to the formation of 2,4-dihydroxy-6-(5,7-dimethyl-2-oxo-trans-3-trans-5-nonadienyl)-3-methylbenzaldehyde (compound 8) after reductive release and aldol condensation. The FAD-dependent monooxygenase ATEG_07662 is the next enzyme in the biosynthesis sequence and hydroxylates the side chain at the benzylic position of compound 8. In Aspergillus nidulans, afoF, the ortholog of the FAD-dependent oxygenase ATEG_07660, is the key enzyme for the biosynthesis of asperfuranone by catalyzing the hydroxylation at C-8 of to prevent the formation of a six-membered ring hemiacetal intermediate and thus facilitating the formation of a five-membered ring to produce asperfuranone. In Aspergillus terreus, ATEG_07660 is probably not functional, which leads to the formation of the six-membered ring hemiacetal intermediate presperpyranone instead of asperfuranone. Finally, ATEG_03636 is involved in the condensation of the polyhydric phenol moiety produced by cluster A and the perasperpyranone precursor produced by cluster B, to yield azasperpyranone A. Further modifications of azasperpyranone A result in the production of derivatives, including azasperpyranone B to F. The protein is Cytochrome P450 monooxygenase ATEG_03631 of Aspergillus terreus (strain NIH 2624 / FGSC A1156).